Reading from the N-terminus, the 215-residue chain is MANRGATRPNGPNTGNKICQFKLVLLGESAVGKSSLVLRFVKGQFHEFQESTIGAAFLTQTVCLDDTTVKFEIWDTAGQERYHSLAPMYYRGAQAAIVVYDITNEESFARAKNWVKELQRQASPNIVIALSGNKADLANKRAVDFQEAQSYADDNSLLFMETSAKTSMNVNEIFMAIAKKLPKNEPQNPGINCTRGRGVDLTEPTQPTRSQCCSN.

Positions 29, 30, 32, 33, 34, 35, 46, 47, 52, and 78 each coordinate GTP. S34 provides a ligand contact to Mg(2+). Short sequence motifs (switch) lie at residues 44 to 56 (QFHE…IGAA) and 77 to 93 (AGQE…YRGA). T52 is a binding site for Mg(2+). Residue S84 is modified to Phosphoserine. Residues N133, K134, D136, A164, and K165 each coordinate GTP. The interval 185-215 (EPQNPGINCTRGRGVDLTEPTQPTRSQCCSN) is disordered. Polar residues predominate over residues 203-215 (EPTQPTRSQCCSN). S-geranylgeranyl cysteine attachment occurs at residues C212 and C213.

The protein belongs to the small GTPase superfamily. Rab family. As to quaternary structure, interacts with GDI1; this promotes dissociation from membranes; phosphorylation at Ser-84 disrupts this interaction. Interacts with GDI2; phosphorylation at Ser-84 disrupts the interaction. Interacts with SGSM1 and SGSM3. Interacts with PIK3CB. Interacts with RIN1 and GAPVD1, which regulate its pathway, probably by acting as a GEF. Interacts with RINL. Interacts with ALS2CL, SUN2, ZFYVE20 and RUFY1. Interacts with RABEP1; one RABEP1 homodimer binds two RAB5A chains, but at opposite sides of the dimer. Interacts with OCRL and INPP5F. May be a component of a complex composed of RAB5A, DYN2 and PIK3C3. Does not interact with the BLOC-3 complex (heterodimer of HPS1 and HPS4). Interacts with CLN5. Interacts with APPL2. Interacts with F8A1/F8A2/F8A3. Found in a complex with F8A1/F8A2/F8A3, HTT and RAB5A; mediates the recruitment of HTT by RAB5A onto early endosomes. Interacts with ATP9A. Interacts with PPP1R21; mediates the recruitment of FERRY complex by RAB5A onto early endosomes. The cofactor is Mg(2+). Phosphorylation of Ser-84 in the switch II region by LRRK2 prevents the association of RAB regulatory proteins, including RAB GDP dissociation inhibitors GDI1 and GDI2.

The protein resides in the cell membrane. It localises to the early endosome membrane. It is found in the melanosome. Its subcellular location is the cytoplasmic vesicle. The protein localises to the cell projection. The protein resides in the ruffle. It localises to the membrane. It is found in the cytoplasm. Its subcellular location is the cytosol. The protein localises to the phagosome membrane. The protein resides in the endosome membrane. The catalysed reaction is GTP + H2O = GDP + phosphate + H(+). Its activity is regulated as follows. Regulated by guanine nucleotide exchange factors (GEFs) including RINL, which promote the exchange of bound GDP for free GTP. Regulated by GTPase activating proteins (GAPs) which increase the GTP hydrolysis activity. Inhibited by GDP dissociation inhibitors (GDIs). Functionally, the small GTPases Rab are key regulators of intracellular membrane trafficking, from the formation of transport vesicles to their fusion with membranes. Rabs cycle between an inactive GDP-bound form and an active GTP-bound form that is able to recruit to membranes different sets of downstream effectors directly responsible for vesicle formation, movement, tethering and fusion. RAB5A is required for the fusion of plasma membranes and early endosomes. Contributes to the regulation of filopodia extension. Required for the exosomal release of SDCBP, CD63, PDCD6IP and syndecan. Regulates maturation of apoptotic cell-containing phagosomes, probably downstream of DYN2 and PIK3C3. In Sus scrofa (Pig), this protein is Ras-related protein Rab-5A (RAB5A).